Reading from the N-terminus, the 245-residue chain is Probable phosphatase ECA2529 (245 aa).

Zn(2+) is bound by residues His7, His9, His15, His40, Glu73, His101, His131, Asp192, and His194.

It belongs to the PHP family. Homotrimer. Zn(2+) serves as cofactor.

The polypeptide is Probable phosphatase ECA2529 (Pectobacterium atrosepticum (strain SCRI 1043 / ATCC BAA-672) (Erwinia carotovora subsp. atroseptica)).